We begin with the raw amino-acid sequence, 145 residues long: UPF0201 protein STK_09490 (145 aa).

The protein belongs to the UPF0201 family.

In Sulfurisphaera tokodaii (strain DSM 16993 / JCM 10545 / NBRC 100140 / 7) (Sulfolobus tokodaii), this protein is UPF0201 protein STK_09490.